Here is a 428-residue protein sequence, read N- to C-terminus: Peptidase B (428 aa).

Mn(2+) contacts are provided by lysine 195 and aspartate 200. Lysine 207 is an active-site residue. The Mn(2+) site is built by aspartate 218, aspartate 277, and glutamate 279. Arginine 281 is a catalytic residue.

It belongs to the peptidase M17 family. Homohexamer. The cofactor is Mn(2+).

It localises to the cytoplasm. It catalyses the reaction Release of an N-terminal amino acid, Xaa, from a peptide or arylamide. Xaa is preferably Glu or Asp but may be other amino acids, including Leu, Met, His, Cys and Gln.. Functionally, probably plays an important role in intracellular peptide degradation. The protein is Peptidase B of Klebsiella pneumoniae (strain 342).